The sequence spans 360 residues: Photosystem II protein D1 (360 aa).

3 helical membrane passes run 29 to 46, 118 to 133, and 142 to 156; these read YIGW…SAIA, HFLI…EWEL, and WICV…AATA. H118 serves as a coordination point for chlorophyll a. Residue Y126 participates in pheophytin a binding. 2 residues coordinate [CaMn4O5] cluster: D170 and E189. Residues 197–218 traverse the membrane as a helical segment; the sequence is FHMLGVAGVFGGSLFSAMHGSL. Chlorophyll a is bound at residue H198. Residues H215 and 264 to 265 contribute to the a quinone site; that span reads SF. Residue H215 participates in Fe cation binding. H272 provides a ligand contact to Fe cation. The helical transmembrane segment at 274–288 threads the bilayer; it reads FLAAWPVIGIWFTAL. The [CaMn4O5] cluster site is built by H332, E333, D342, and A344. Residues 345–360 constitute a propeptide that is removed on maturation; the sequence is AGDVAPVALTAPPING.

It belongs to the reaction center PufL/M/PsbA/D family. In terms of assembly, PSII is composed of 1 copy each of membrane proteins PsbA, PsbB, PsbC, PsbD, PsbE, PsbF, PsbH, PsbI, PsbJ, PsbK, PsbL, PsbM, PsbT, PsbX, PsbY, PsbZ, Psb30/Ycf12, peripheral proteins PsbO, CyanoQ (PsbQ), PsbU, PsbV and a large number of cofactors. It forms dimeric complexes. The cofactor is The D1/D2 heterodimer binds P680, chlorophylls that are the primary electron donor of PSII, and subsequent electron acceptors. It shares a non-heme iron and each subunit binds pheophytin, quinone, additional chlorophylls, carotenoids and lipids. D1 provides most of the ligands for the Mn4-Ca-O5 cluster of the oxygen-evolving complex (OEC). There is also a Cl(-1) ion associated with D1 and D2, which is required for oxygen evolution. The PSII complex binds additional chlorophylls, carotenoids and specific lipids.. In terms of processing, tyr-161 forms a radical intermediate that is referred to as redox-active TyrZ, YZ or Y-Z. C-terminally processed by CtpA; processing is essential to allow assembly of the oxygen-evolving complex and thus photosynthetic growth.

The protein localises to the cellular thylakoid membrane. It carries out the reaction 2 a plastoquinone + 4 hnu + 2 H2O = 2 a plastoquinol + O2. Its function is as follows. Photosystem II (PSII) is a light-driven water:plastoquinone oxidoreductase that uses light energy to abstract electrons from H(2)O, generating O(2) and a proton gradient subsequently used for ATP formation. It consists of a core antenna complex that captures photons, and an electron transfer chain that converts photonic excitation into a charge separation. The D1/D2 (PsbA/PsbD) reaction center heterodimer binds P680, the primary electron donor of PSII as well as several subsequent electron acceptors. In Trichormus azollae (Anabaena azollae), this protein is Photosystem II protein D1.